Consider the following 344-residue polypeptide: Dihydroorotase (344 aa).

Zn(2+) contacts are provided by His-13 and His-15. Substrate-binding positions include 15 to 17 and Asn-41; that span reads HLR. Residues Lys-99, His-136, and His-174 each contribute to the Zn(2+) site. N6-carboxylysine is present on Lys-99. Residue His-136 coordinates substrate. Leu-219 is a substrate binding site. Zn(2+) is bound at residue Asp-247. Asp-247 is an active-site residue. Substrate contacts are provided by His-251 and Ala-263.

The protein belongs to the metallo-dependent hydrolases superfamily. DHOase family. Class II DHOase subfamily. In terms of assembly, homodimer. It depends on Zn(2+) as a cofactor.

It catalyses the reaction (S)-dihydroorotate + H2O = N-carbamoyl-L-aspartate + H(+). Its pathway is pyrimidine metabolism; UMP biosynthesis via de novo pathway; (S)-dihydroorotate from bicarbonate: step 3/3. In terms of biological role, catalyzes the reversible cyclization of carbamoyl aspartate to dihydroorotate. This chain is Dihydroorotase, found in Microcystis aeruginosa (strain NIES-843 / IAM M-2473).